We begin with the raw amino-acid sequence, 338 residues long: Holliday junction branch migration complex subunit RuvB (338 aa).

The large ATPase domain (RuvB-L) stretch occupies residues 1 to 181 (MERAITPEKR…FGVISRLEFY (181 aa)). Residues Leu20, Arg21, Gly62, Lys65, Thr66, Thr67, 128–130 (EDF), Arg171, Tyr181, and Arg218 contribute to the ATP site. Residue Thr66 coordinates Mg(2+). Residues 182–252 (THDELAFIVT…VVQETLRLLE (71 aa)) form a small ATPAse domain (RuvB-S) region. The tract at residues 255 to 338 (EMGFDQMDRM…TPERPQGSLF (84 aa)) is head domain (RuvB-H). Residues Arg310 and Arg315 each coordinate DNA.

The protein belongs to the RuvB family. In terms of assembly, homohexamer. Forms an RuvA(8)-RuvB(12)-Holliday junction (HJ) complex. HJ DNA is sandwiched between 2 RuvA tetramers; dsDNA enters through RuvA and exits via RuvB. An RuvB hexamer assembles on each DNA strand where it exits the tetramer. Each RuvB hexamer is contacted by two RuvA subunits (via domain III) on 2 adjacent RuvB subunits; this complex drives branch migration. In the full resolvosome a probable DNA-RuvA(4)-RuvB(12)-RuvC(2) complex forms which resolves the HJ.

It is found in the cytoplasm. It carries out the reaction ATP + H2O = ADP + phosphate + H(+). Functionally, the RuvA-RuvB-RuvC complex processes Holliday junction (HJ) DNA during genetic recombination and DNA repair, while the RuvA-RuvB complex plays an important role in the rescue of blocked DNA replication forks via replication fork reversal (RFR). RuvA specifically binds to HJ cruciform DNA, conferring on it an open structure. The RuvB hexamer acts as an ATP-dependent pump, pulling dsDNA into and through the RuvAB complex. RuvB forms 2 homohexamers on either side of HJ DNA bound by 1 or 2 RuvA tetramers; 4 subunits per hexamer contact DNA at a time. Coordinated motions by a converter formed by DNA-disengaged RuvB subunits stimulates ATP hydrolysis and nucleotide exchange. Immobilization of the converter enables RuvB to convert the ATP-contained energy into a lever motion, pulling 2 nucleotides of DNA out of the RuvA tetramer per ATP hydrolyzed, thus driving DNA branch migration. The RuvB motors rotate together with the DNA substrate, which together with the progressing nucleotide cycle form the mechanistic basis for DNA recombination by continuous HJ branch migration. Branch migration allows RuvC to scan DNA until it finds its consensus sequence, where it cleaves and resolves cruciform DNA. The polypeptide is Holliday junction branch migration complex subunit RuvB (Trichlorobacter lovleyi (strain ATCC BAA-1151 / DSM 17278 / SZ) (Geobacter lovleyi)).